The chain runs to 206 residues: Ephrin-A4 (206 aa).

Positions 1-25 (MRLLPLLRTVLWAALLGSRLPGCSS) are cleaved as a signal peptide. In terms of domain architecture, Ephrin RBD spans 26–158 (LRHPIYWNSS…RLQVSVCCKE (133 aa)). Asn-33 is a glycosylation site (N-linked (GlcNAc...) asparagine). A Cell attachment site motif is present at residues 41–43 (RGD). Intrachain disulfides connect Cys-58–Cys-99 and Cys-86–Cys-147. An N-linked (GlcNAc...) asparagine glycan is attached at Asn-98. Residues 161–180 (SSHESAHPVGSPGESGTSGW) are disordered. Ser-175 carries the GPI-anchor amidated serine lipid modification. The propeptide at 176 to 206 (GTSGWRGGHAPSPLCLLLLLLLPILRLLRVL) is removed in mature form.

This sequence belongs to the ephrin family. In terms of tissue distribution, expressed in myogenic progenitor cells.

Its subcellular location is the cell membrane. Cell surface GPI-bound ligand for Eph receptors, a family of receptor tyrosine kinases which are crucial for migration, repulsion and adhesion during neuronal, vascular and epithelial development. Binds promiscuously Eph receptors residing on adjacent cells, leading to contact-dependent bidirectional signaling into neighboring cells. May play a role in the interaction between activated B-lymphocytes and dendritic cells in tonsils. This Mus musculus (Mouse) protein is Ephrin-A4 (Efna4).